Here is a 284-residue protein sequence, read N- to C-terminus: Small ribosomal subunit protein uS5 (284 aa).

Residues 1–10 (MMADEKKTPE) show a composition bias toward basic and acidic residues. Positions 1 to 105 (MMADEKKTPE…DNRRGGRREE (105 aa)) are disordered. Low complexity predominate over residues 14–23 (ETATPAVAVE). Over residues 24-43 (DALKAEPTETLEAQKAKAEA) the composition is skewed to basic and acidic residues. The span at 44-67 (ETPAVAETPSEAAANQSAAQGAEG) shows a compositional bias: low complexity. The segment covering 68-105 (QPRERGGHDRGGRGGRGGNDRGRGRGGRDNRRGGRREE) has biased composition (basic and acidic residues). The 64-residue stretch at 110–173 (IIEKLVHINR…AAARKKMIRV (64 aa)) folds into the S5 DRBM domain. The interval 246–284 (DQTSPKSVAQRRGKKVADLLGRGGASEAEAEADAAAIAE) is disordered.

This sequence belongs to the universal ribosomal protein uS5 family. Part of the 30S ribosomal subunit. Contacts proteins S4 and S8.

Functionally, with S4 and S12 plays an important role in translational accuracy. Located at the back of the 30S subunit body where it stabilizes the conformation of the head with respect to the body. In Erythrobacter litoralis (strain HTCC2594), this protein is Small ribosomal subunit protein uS5.